The following is a 201-amino-acid chain: Sec-independent protein translocase protein TatB (201 aa).

A helical transmembrane segment spans residues 1-21 (MLDLGWSEILVIAVVLIVVVG). Residues 96–201 (LSEAAKAKPA…RRKKTAGTAP (106 aa)) form a disordered region. Low complexity-rich tracts occupy residues 102-114 (AKPA…AADS) and 159-187 (TSAK…APAK). The span at 189–201 (PSPRRKKTAGTAP) shows a compositional bias: basic residues.

This sequence belongs to the TatB family. The Tat system comprises two distinct complexes: a TatABC complex, containing multiple copies of TatA, TatB and TatC subunits, and a separate TatA complex, containing only TatA subunits. Substrates initially bind to the TatABC complex, which probably triggers association of the separate TatA complex to form the active translocon.

It localises to the cell inner membrane. Its function is as follows. Part of the twin-arginine translocation (Tat) system that transports large folded proteins containing a characteristic twin-arginine motif in their signal peptide across membranes. Together with TatC, TatB is part of a receptor directly interacting with Tat signal peptides. TatB may form an oligomeric binding site that transiently accommodates folded Tat precursor proteins before their translocation. This Chelativorans sp. (strain BNC1) protein is Sec-independent protein translocase protein TatB.